We begin with the raw amino-acid sequence, 39 residues long: Cytochrome b559 subunit beta (39 aa).

Residues 14–30 (WLAVHGLAVPTVFFLGS) form a helical membrane-spanning segment. Histidine 18 is a heme binding site.

Belongs to the PsbE/PsbF family. Heterodimer of an alpha subunit and a beta subunit. PSII is composed of 1 copy each of membrane proteins PsbA, PsbB, PsbC, PsbD, PsbE, PsbF, PsbH, PsbI, PsbJ, PsbK, PsbL, PsbM, PsbT, PsbX, PsbY, PsbZ, Psb30/Ycf12, at least 3 peripheral proteins of the oxygen-evolving complex and a large number of cofactors. It forms dimeric complexes. The cofactor is heme b.

It localises to the plastid. Its subcellular location is the chloroplast thylakoid membrane. Functionally, this b-type cytochrome is tightly associated with the reaction center of photosystem II (PSII). PSII is a light-driven water:plastoquinone oxidoreductase that uses light energy to abstract electrons from H(2)O, generating O(2) and a proton gradient subsequently used for ATP formation. It consists of a core antenna complex that captures photons, and an electron transfer chain that converts photonic excitation into a charge separation. The protein is Cytochrome b559 subunit beta of Welwitschia mirabilis (Tree tumbo).